Here is a 236-residue protein sequence, read N- to C-terminus: Protein N-lysine methyltransferase METTL21A (236 aa).

S-adenosyl-L-methionine contacts are provided by residues W47, 73–75, D112, W143, and A161; that span reads GAG.

This sequence belongs to the methyltransferase superfamily. METTL21 family. Interacts with heat shock 70 family members; at least some of these proteins are methylation substrates.

It localises to the cytoplasm. It catalyses the reaction L-lysyl-[protein] + 3 S-adenosyl-L-methionine = N(6),N(6),N(6)-trimethyl-L-lysyl-[protein] + 3 S-adenosyl-L-homocysteine + 3 H(+). Its function is as follows. Protein-lysine methyltransferase that selectively trimethylates residues in heat shock protein 70 (HSP70) family members. Contributes to the in vivo trimethylation of Lys residues in HSPA1 and HSPA8. In vitro methylates 'Lys-561' in HSPA1, 'Lys-564' in HSPA2, 'Lys-585' in HSPA5, 'Lys-563' in HSPA6 and 'Lys-561' in HSPA8. In Pongo abelii (Sumatran orangutan), this protein is Protein N-lysine methyltransferase METTL21A (METTL21A).